Reading from the N-terminus, the 80-residue chain is Defensin coprisin (80 aa).

Residues 1–20 (MAKLIAFALVASLCLSMVLC) form the signal peptide. Positions 21-37 (NPLPEEVQEEGLVRQKR) are excised as a propeptide. Intrachain disulfides connect Cys-40–Cys-71, Cys-57–Cys-76, and Cys-61–Cys-78.

This sequence belongs to the invertebrate defensin family. Type 1 subfamily.

Its subcellular location is the secreted. It localises to the target cell membrane. Functionally, potent broad-spectrum antibacterial peptide against both Gram-positive (B.subtilis, S.epidermidis, and S.aureus) and Gram-negative bacteria (E.coli, S.typhimurium, and P.aeruginosa). Is also active against all antibiotic-resistant bacterial strains tested. Induces apoptosis in C.albicans, but does not disrupt the fungal plasma membrane at all. Acts by permeabilizing the bacterial cell membrane, but not human membranes. Also shows potent anti-inflammatory activities, since it reduces both LPS-induced nitric oxide release and pro-inflammatory cytokine production. Anti-inflammatory activities are initiated by suppressing the binding of LPS to toll-like receptor 4 (TLR4), and subsequently inhibiting the phosphorylation of p38 mitogen-activated protein kinase (MAPK) and nuclear translocation of NF-kB (TNFRSF11A). Does not show hemolytic activity against human erythrocytes. In Copris tripartitus (Dung beetle), this protein is Defensin coprisin.